Reading from the N-terminus, the 802-residue chain is Leucine--tRNA ligase (802 aa).

The 'HIGH' region motif lies at 40-51; the sequence is PYPSGAGLHVGH. The 'KMSKS' region signature appears at 576-580; that stretch reads KMSKS. K579 lines the ATP pocket.

Belongs to the class-I aminoacyl-tRNA synthetase family.

Its subcellular location is the cytoplasm. The catalysed reaction is tRNA(Leu) + L-leucine + ATP = L-leucyl-tRNA(Leu) + AMP + diphosphate. The protein is Leucine--tRNA ligase of Bacillus cereus (strain ATCC 10987 / NRS 248).